Reading from the N-terminus, the 533-residue chain is 2-isopropylmalate synthase (533 aa).

The Pyruvate carboxyltransferase domain maps to Val8–Ala270. 4 residues coordinate Mn(2+): Asp17, His209, His211, and Asn245. The regulatory domain stretch occupies residues Arg409–Val533.

This sequence belongs to the alpha-IPM synthase/homocitrate synthase family. LeuA type 1 subfamily. As to quaternary structure, homodimer. Mn(2+) is required as a cofactor.

It is found in the cytoplasm. It carries out the reaction 3-methyl-2-oxobutanoate + acetyl-CoA + H2O = (2S)-2-isopropylmalate + CoA + H(+). Its pathway is amino-acid biosynthesis; L-leucine biosynthesis; L-leucine from 3-methyl-2-oxobutanoate: step 1/4. Functionally, catalyzes the condensation of the acetyl group of acetyl-CoA with 3-methyl-2-oxobutanoate (2-ketoisovalerate) to form 3-carboxy-3-hydroxy-4-methylpentanoate (2-isopropylmalate). The chain is 2-isopropylmalate synthase from Microcystis aeruginosa.